A 74-amino-acid chain; its full sequence is uncharacterized protein (74 aa).

A helical membrane pass occupies residues leucine 8–alanine 30.

It is found in the mitochondrion outer membrane. This is an uncharacterized protein from Saccharomyces cerevisiae (strain ATCC 204508 / S288c) (Baker's yeast).